We begin with the raw amino-acid sequence, 367 residues long: Alanine racemase (367 aa).

Residue Lys40 is the Proton acceptor; specific for D-alanine of the active site. At Lys40 the chain carries N6-(pyridoxal phosphate)lysine. Arg136 is a substrate binding site. Residue Tyr263 is the Proton acceptor; specific for L-alanine of the active site. Substrate is bound at residue Met310.

The protein belongs to the alanine racemase family. Pyridoxal 5'-phosphate serves as cofactor.

It carries out the reaction L-alanine = D-alanine. The protein operates within amino-acid biosynthesis; D-alanine biosynthesis; D-alanine from L-alanine: step 1/1. Functionally, catalyzes the interconversion of L-alanine and D-alanine. May also act on other amino acids. This chain is Alanine racemase (alr), found in Streptococcus suis (strain 98HAH33).